Reading from the N-terminus, the 600-residue chain is Integrator complex subunit 11 (600 aa).

Histidine 68, histidine 70, aspartate 72, histidine 73, histidine 157, and aspartate 178 together coordinate Zn(2+). Residues 68–73 carry the HXHXDH motif motif; that stretch reads HFHLDH. The active site involves glutamate 203. Residue lysine 381 forms a Glycyl lysine isopeptide (Lys-Gly) (interchain with G-Cter in SUMO) linkage. Residue histidine 414 coordinates Zn(2+). Residues lysine 462 and lysine 475 each participate in a glycyl lysine isopeptide (Lys-Gly) (interchain with G-Cter in SUMO) cross-link. A Nuclear localization signal motif is present at residues 469–479; it reads LLPEAKKPRLL.

The protein belongs to the metallo-beta-lactamase superfamily. RNA-metabolizing metallo-beta-lactamase-like family. INTS11 subfamily. Component of the Integrator complex, composed of core subunits INTS1, INTS2, INTS3, INTS4, INTS5, INTS6, INTS7, INTS8, INTS9/RC74, INTS10, INTS11/CPSF3L, INTS12, INTS13, INTS14 and INTS15. The core complex associates with protein phosphatase 2A subunits PPP2CA and PPP2R1A, to form the Integrator-PP2A (INTAC) complex. INTS11 is part of the RNA endonuclease subcomplex, composed of INTS4, INTS9, INTS11 and inositol hexakisphosphate (InsP6). Interacts with WDR73; interaction is required for the assembly of the RNA endonuclease subcomplex in the cytoplasm. Interacts with BRAT1; interaction is required for the assembly of the RNA endonuclease subcomplex and inhibits the endonuclease activity of INTS11 before formation of mature integrator complex. Zn(2+) serves as cofactor. In terms of processing, sumoylated; sumoylation regulates its subcellular location and is required for integrator complex integrity.

The protein localises to the nucleus. It is found in the cytoplasm. The RNA endonuclease activity is inhibited by BRAT1 that forms hyrogen bond and hydrophobic interactions with the active site. In terms of biological role, RNA endonuclease component of the integrator complex, a multiprotein complex that terminates RNA polymerase II (Pol II) transcription in the promoter-proximal region of genes. The integrator complex provides a quality checkpoint during transcription elongation by driving premature transcription termination of transcripts that are unfavorably configured for transcriptional elongation: the complex terminates transcription by (1) catalyzing dephosphorylation of the C-terminal domain (CTD) of Pol II subunit POLR2A/RPB1 and SUPT5H/SPT5, (2) degrading the exiting nascent RNA transcript via endonuclease activity and (3) promoting the release of Pol II from bound DNA. The integrator complex is also involved in terminating the synthesis of non-coding Pol II transcripts, such as enhancer RNAs (eRNAs), small nuclear RNAs (snRNAs), telomerase RNAs and long non-coding RNAs (lncRNAs). Within the integrator complex, INTS11 constitutes the RNA endonuclease subunit that degrades exiting nascent RNA transcripts. Mediates recruitment of cytoplasmic dynein to the nuclear envelope, probably as component of the integrator complex. This Pongo abelii (Sumatran orangutan) protein is Integrator complex subunit 11 (INTS11).